The following is a 354-amino-acid chain: ATPase GET3 (354 aa).

26–33 (KGGVGKTT) is an ATP binding site. Asp57 is an active-site residue. Residues Glu245 and Asn272 each contribute to the ATP site. Zn(2+)-binding residues include Cys285 and Cys288.

This sequence belongs to the arsA ATPase family. Homodimer. Component of the Golgi to ER traffic (GET) complex, which is composed of GET1, GET2 and GET3. Within the complex, GET1 and GET2 form a heterotetramer which is stabilized by phosphatidylinositol binding and which binds to the GET3 homodimer. Interacts with the chloride channel protein GEF1.

The protein localises to the cytoplasm. The protein resides in the endoplasmic reticulum. It localises to the golgi apparatus. ATPase required for the post-translational delivery of tail-anchored (TA) proteins to the endoplasmic reticulum. Recognizes and selectively binds the transmembrane domain of TA proteins in the cytosol. This complex then targets to the endoplasmic reticulum by membrane-bound receptors GET1 and GET2, where the tail-anchored protein is released for insertion. This process is regulated by ATP binding and hydrolysis. ATP binding drives the homodimer towards the closed dimer state, facilitating recognition of newly synthesized TA membrane proteins. ATP hydrolysis is required for insertion. Subsequently, the homodimer reverts towards the open dimer state, lowering its affinity for the GET1-GET2 receptor, and returning it to the cytosol to initiate a new round of targeting. Cooperates with the HDEL receptor ERD2 to mediate the ATP-dependent retrieval of resident ER proteins that contain a C-terminal H-D-E-L retention signal from the Golgi to the ER. Involved in low-level resistance to the oxyanions arsenite and arsenate, and in heat tolerance. This Saccharomyces cerevisiae (strain RM11-1a) (Baker's yeast) protein is ATPase GET3.